A 151-amino-acid polypeptide reads, in one-letter code: MKVIFTQDVRGKGNRGQVKEVPDGYAENFLIRKGLAKAATPQAMSALRGQQRLEEKKEAEKKTEAEAMKAKIEDDKTVVQIQSKAGEDSRLFGSIPSKQIAQALDKQYQIKVDKRKIDLKQPIRSLGFTNVTVNLFPGIDARIRVHVIEQK.

It belongs to the bacterial ribosomal protein bL9 family.

Its function is as follows. Binds to the 23S rRNA. The chain is Large ribosomal subunit protein bL9 from Lacticaseibacillus casei (strain BL23) (Lactobacillus casei).